Reading from the N-terminus, the 210-residue chain is Probable GTP-binding protein EngB (210 aa).

An EngB-type G domain is found at 30-204; the sequence is QGYEVAFAGR…YRVLADWMEL (175 aa). GTP-binding positions include 38 to 45, 64 to 68, 82 to 85, 149 to 152, and 182 to 185; these read GRSNAGKS, GRTQL, DLPG, TKAD, and LFSA. Ser45 and Thr66 together coordinate Mg(2+).

This sequence belongs to the TRAFAC class TrmE-Era-EngA-EngB-Septin-like GTPase superfamily. EngB GTPase family. It depends on Mg(2+) as a cofactor.

Its function is as follows. Necessary for normal cell division and for the maintenance of normal septation. The chain is Probable GTP-binding protein EngB from Pseudomonas putida (strain ATCC 700007 / DSM 6899 / JCM 31910 / BCRC 17059 / LMG 24140 / F1).